Here is an 847-residue protein sequence, read N- to C-terminus: Leucine--tRNA ligase (847 aa).

The 'HIGH' region signature appears at 41–51 (PYPSGRIHMGH). A 'KMSKS' region motif is present at residues 619-623 (KMSKS). Position 622 (Lys622) interacts with ATP.

The protein belongs to the class-I aminoacyl-tRNA synthetase family.

The protein resides in the cytoplasm. The enzyme catalyses tRNA(Leu) + L-leucine + ATP = L-leucyl-tRNA(Leu) + AMP + diphosphate. This is Leucine--tRNA ligase from Cereibacter sphaeroides (strain ATCC 17029 / ATH 2.4.9) (Rhodobacter sphaeroides).